A 412-amino-acid polypeptide reads, in one-letter code: MNDSGYQSNLSLLRVFLDEFRSVLRQESPGLIPRLAFYYVRAFLSLLCQYPNKKLASLPLYRWINLFIMCNVMTIFWTMFVALPESKNVIEMGDDLVWISGMALVFTKIFYMHLRCDEIDELISDFEYYNRELRPHNIDEEVLGWQRLCYVIESGLYINCFCLVNFFSAAIFLQPLLGEGKLPFHSVYPFQWHRLDLHPYTFWFLYIWQSLTSQHNLMSILMVDMVGISTFLQTALNLKLLCIEIRKLGDMEVSDKRFHEEFCRVVRFHQHIIKLVGKANRAFNGAFNAQLMASFSLISISTFETMAAAAVDPKMAAKFVLLMLVAFIQLSLWCVSGTLVYTQSVEVAQAAFDINDWHTKSPGIQRDISFVILRAQKPLMYVAEPFLPFTLGTYMLVLKNCYRLLALMQESM.

Residues 1 to 74 (MNDSGYQSNL…NLFIMCNVMT (74 aa)) lie on the Cytoplasmic side of the membrane. The chain crosses the membrane as a helical span at residues 75 to 95 (IFWTMFVALPESKNVIEMGDD). The Extracellular portion of the chain corresponds to 96–103 (LVWISGMA). Residues 104 to 124 (LVFTKIFYMHLRCDEIDELIS) form a helical membrane-spanning segment. The Cytoplasmic portion of the chain corresponds to 125 to 169 (DFEYYNRELRPHNIDEEVLGWQRLCYVIESGLYINCFCLVNFFSA). The chain crosses the membrane as a helical span at residues 170-190 (AIFLQPLLGEGKLPFHSVYPF). Over 191–229 (QWHRLDLHPYTFWFLYIWQSLTSQHNLMSILMVDMVGIS) the chain is Extracellular. The helical transmembrane segment at 230-250 (TFLQTALNLKLLCIEIRKLGD) threads the bilayer. The Cytoplasmic segment spans residues 251 to 302 (MEVSDKRFHEEFCRVVRFHQHIIKLVGKANRAFNGAFNAQLMASFSLISIST). Residues 303-323 (FETMAAAAVDPKMAAKFVLLM) traverse the membrane as a helical segment. Residues 324–330 (LVAFIQL) are Extracellular-facing. The chain crosses the membrane as a helical span at residues 331–351 (SLWCVSGTLVYTQSVEVAQAA). Residues 352–389 (FDINDWHTKSPGIQRDISFVILRAQKPLMYVAEPFLPF) are Cytoplasmic-facing. Residues 390–410 (TLGTYMLVLKNCYRLLALMQE) form a helical membrane-spanning segment. The Extracellular portion of the chain corresponds to 411–412 (SM).

Belongs to the insect chemoreceptor superfamily. Heteromeric odorant receptor channel (TC 1.A.69) family. Or49a subfamily. As to quaternary structure, interacts with Orco. Complexes exist early in the endomembrane system in olfactory sensory neurons (OSNs), coupling these complexes to the conserved ciliary trafficking pathway. As to expression, expressed in olfactory sensory neurons in the antenna.

Its subcellular location is the cell membrane. Its function is as follows. Odorant receptor which mediates acceptance or avoidance behavior, depending on its substrates. The odorant receptor repertoire encodes a large collection of odor stimuli that vary widely in identity, intensity, and duration. May form a complex with Orco to form odorant-sensing units, providing sensitive and prolonged odorant signaling and calcium permeability. Plays an important role in sociosexual interactions since its enhances courtship in a pheromone-dependent manner. The sequence is that of Odorant receptor 47b (Or47b) from Drosophila melanogaster (Fruit fly).